A 554-amino-acid chain; its full sequence is 3-(3-hydroxy-phenyl)propionate/3-hydroxycinnamic acid hydroxylase (554 aa).

FAD is bound by residues 17–46 and 285–295; these read QVAIAGAGPVGLMMANYLGQMGIDVLVVEK and FRIDRVLLAGD.

This sequence belongs to the PheA/TfdB FAD monooxygenase family. FAD is required as a cofactor.

It catalyses the reaction 3-(3-hydroxyphenyl)propanoate + NADH + O2 + H(+) = 3-(2,3-dihydroxyphenyl)propanoate + NAD(+) + H2O. It carries out the reaction (2E)-3-(3-hydroxyphenyl)prop-2-enoate + NADH + O2 + H(+) = (2E)-3-(2,3-dihydroxyphenyl)prop-2-enoate + NAD(+) + H2O. It functions in the pathway aromatic compound metabolism; 3-phenylpropanoate degradation. Functionally, catalyzes the insertion of one atom of molecular oxygen into position 2 of the phenyl ring of 3-(3-hydroxyphenyl)propionate (3-HPP) and hydroxycinnamic acid (3HCI). This is 3-(3-hydroxy-phenyl)propionate/3-hydroxycinnamic acid hydroxylase from Shigella sonnei (strain Ss046).